The chain runs to 444 residues: Ribosomal protein uS12 methylthiotransferase RimO (444 aa).

The MTTase N-terminal domain occupies 1-117; it reads MKVGIISLGC…ITEVISSALK (117 aa). The [4Fe-4S] cluster site is built by C10, C46, C80, C154, C158, and C161. The Radical SAM core domain occupies 140–370; that stretch reads YQPGPSAYIK…WEVQKEITRK (231 aa). Residues 373–441 form the TRAM domain; the sequence is EGLVGTEMRV…DYDLIGEMTN (69 aa).

This sequence belongs to the methylthiotransferase family. RimO subfamily. [4Fe-4S] cluster serves as cofactor.

It localises to the cytoplasm. The enzyme catalyses L-aspartate(89)-[ribosomal protein uS12]-hydrogen + (sulfur carrier)-SH + AH2 + 2 S-adenosyl-L-methionine = 3-methylsulfanyl-L-aspartate(89)-[ribosomal protein uS12]-hydrogen + (sulfur carrier)-H + 5'-deoxyadenosine + L-methionine + A + S-adenosyl-L-homocysteine + 2 H(+). In terms of biological role, catalyzes the methylthiolation of an aspartic acid residue of ribosomal protein uS12. The chain is Ribosomal protein uS12 methylthiotransferase RimO from Natranaerobius thermophilus (strain ATCC BAA-1301 / DSM 18059 / JW/NM-WN-LF).